Consider the following 316-residue polypeptide: Probable thioesterase lcsE (316 aa).

It belongs to the AMT4 thioesterase family.

The protein operates within secondary metabolite biosynthesis. Functionally, probable thioesterase; part of the gene cluster that mediates the biosynthesis of the lipopeptide antibiotics leucinostatins that show extensive biological activities, including antimalarial, antiviral, antibacterial, antifungal, and antitumor activities, as well as phytotoxic. Leucinostatin A contains nine amino acid residues, including the unusual amino acid 4-methyl-L-proline (MePro), 2-amino-6-hydroxy-4-methyl-8-oxodecanoic acid (AHyMeOA), 3-hydroxyleucine (HyLeu), alpha-aminoisobutyric acid (AIB), beta-Ala, a 4-methylhex-2-enoic acid at the N-terminus as well as a N1,N1-dimethylpropane-1,2-diamine (DPD) at the C-terminus. The biosynthesis of leucinostatins is probably initiated with the assembly of 4-methylhex-2-enoic acid by a reducing PKS. Two reducing polyketide synthases, lcsB and lcsC, have been identified in the cluster and it is not clear which is the one that assembles 4-methylhex-2-enoic acid since both contain KS, AT, DH, cMT, ER, KR and ACP domains. The polyketide residue might be transferred to the NRPS lcsA, mediated by two additional enzymes, the acyl-CoA ligase lcsD and the thioesterase lcsE. The linear polyketide carboxylic acid, which is released from PKS, is converted to a CoA thioester by lcsD, and then lcsE hydrolyzes the thiol bond and shuttles the polyketide intermediate to lcsA. The C domain of the first module catalyzed the condensation of 4-methylhex-2-enoic acid and MePro carried by domain A1, followed by successive condensations of nine amino acids to trigger the elongation of the linear peptide. A5 and A6 domains of lcsA are proposed to incorporate leucine, A2 AHyMeOA, and A3 incorporates HyLeu. A4, A7 and A8 incorporate AIB. The AHyMeOA in leucinostatin A activated by the A2 might be produced by the second PKS (lcsB or lcsC) present within the cluster. The MePro is probably produced via leucine cyclization and may originate from a separate pathway, independent of the cluster. Another nonproteinogenic amino acid, beta-Ala, could be produced by an aspartic acid decarboxylase also localized outside of the cluster. Two candidates are VFPBJ_01400 and VFPBJ_10476. The final peptide scaffold may be released by the NAD(P)H-dependent thioester reductase (TE) at the C-terminal region of lcsA. Transamination of the lcsA product by the transaminase lcsP may produce DPD at the C-terminus. Further hydroxylation steps performed alternatively by the cytochrome P450 monooxygenases lcsI, lcsK and lcsN then yield the non-methylated leucinostatins precursor. It is also possible that leucines can be hydroxylated prior to their incorporation into the peptide. Varying extents of methylation then lead to the formation of leucinostatins A and B. The polypeptide is Probable thioesterase lcsE (Purpureocillium lilacinum (Paecilomyces lilacinus)).